The primary structure comprises 120 residues: Chaperonin GroEL (120 aa).

Position 23 to 27 (23 to 27 (DGTTT)) interacts with ATP.

It belongs to the chaperonin (HSP60) family. Forms a cylinder of 14 subunits composed of two heptameric rings stacked back-to-back. Interacts with the co-chaperonin GroES.

It is found in the cytoplasm. The catalysed reaction is ATP + H2O + a folded polypeptide = ADP + phosphate + an unfolded polypeptide.. Together with its co-chaperonin GroES, plays an essential role in assisting protein folding. The GroEL-GroES system forms a nano-cage that allows encapsulation of the non-native substrate proteins and provides a physical environment optimized to promote and accelerate protein folding. The polypeptide is Chaperonin GroEL (Mycolicibacter nonchromogenicus (Mycobacterium nonchromogenicum)).